Here is a 210-residue protein sequence, read N- to C-terminus: Lysine N-acyltransferase MbtK (210 aa).

His-130 is a binding site for substrate. Asp-168 functions as the Proton acceptor in the catalytic mechanism.

Belongs to the lysine N-acyltransferase MbtK family. In terms of assembly, monomer.

It functions in the pathway siderophore biosynthesis; mycobactin biosynthesis. In terms of biological role, acyltransferase required for the direct transfer of medium- to long-chain fatty acyl moieties from a carrier protein (MbtL) on to the epsilon-amino group of lysine residue in the mycobactin core. This chain is Lysine N-acyltransferase MbtK (mbtK), found in Mycobacterium tuberculosis (strain CDC 1551 / Oshkosh).